A 426-amino-acid chain; its full sequence is Endothelin-1 receptor (426 aa).

Residues Met-1–Ala-20 form the signal peptide. Over Asp-21–Lys-80 the chain is Extracellular. Asn-29 and Asn-62 each carry an N-linked (GlcNAc...) asparagine glycan. Residues Tyr-81–Leu-102 form a helical membrane-spanning segment. Residues Arg-103 to Arg-112 lie on the Cytoplasmic side of the membrane. A helical membrane pass occupies residues Asn-113–Ile-132. Residues Asp-133–Lys-159 lie on the Extracellular side of the membrane. A disulfide bridge links Cys-158 with Cys-239. The helical transmembrane segment at Leu-160–Val-181 threads the bilayer. Over Asp-182 to Glu-205 the chain is Cytoplasmic. The chain crosses the membrane as a helical span at residues Ile-206–Phe-229. Over Glu-230–Asp-256 the chain is Extracellular. Residues Trp-257–Met-278 traverse the membrane as a helical segment. At Thr-279–Lys-306 the chain is on the cytoplasmic side. Residues Thr-307–Leu-328 form a helical membrane-spanning segment. At Lys-329–Leu-347 the chain is on the extracellular side. The helical transmembrane segment at Leu-348 to Val-372 threads the bilayer. Topologically, residues Ser-373 to Asn-426 are cytoplasmic. Ser-424 is modified (phosphoserine).

The protein belongs to the G-protein coupled receptor 1 family. Endothelin receptor subfamily. EDNRA sub-subfamily. As to quaternary structure, interacts with HDAC7 and KAT5. Predominantly expressed in vascular smooth muscle cells of a variety of issues, bronchial smooth muscle cells, myocardium, and the pituitary gland.

The protein localises to the cell membrane. In terms of biological role, receptor for endothelin-1. Mediates its action by association with G proteins that activate a phosphatidylinositol-calcium second messenger system. The rank order of binding affinities for ET-A is: ET1 &gt; ET2 &gt;&gt; ET3. In Rattus norvegicus (Rat), this protein is Endothelin-1 receptor.